The primary structure comprises 128 residues: uncharacterized protein (128 aa).

The VOC domain occupies 2–127 (KLLQIRLLVN…DHNLIEIYKM (126 aa)). Glu-48 and Glu-123 together coordinate Ni(2+).

The protein belongs to the glyoxalase I family.

This is an uncharacterized protein from Bacillus subtilis (strain 168).